A 316-amino-acid polypeptide reads, in one-letter code: Ornithine carbamoyltransferase (316 aa).

Carbamoyl phosphate is bound by residues 57-60 (STRT), Q84, R108, and 135-138 (HPCQ). L-ornithine-binding positions include N166, D230, and 234 to 235 (SM). Carbamoyl phosphate-binding positions include 269 to 270 (CL) and R297.

Belongs to the aspartate/ornithine carbamoyltransferase superfamily. OTCase family.

Its subcellular location is the cytoplasm. It catalyses the reaction carbamoyl phosphate + L-ornithine = L-citrulline + phosphate + H(+). It participates in amino-acid biosynthesis; L-arginine biosynthesis; L-arginine from L-ornithine and carbamoyl phosphate: step 1/3. In terms of biological role, reversibly catalyzes the transfer of the carbamoyl group from carbamoyl phosphate (CP) to the N(epsilon) atom of ornithine (ORN) to produce L-citrulline. This is Ornithine carbamoyltransferase from Bacillus thuringiensis subsp. konkukian (strain 97-27).